A 7756-amino-acid polypeptide reads, in one-letter code: Linear gramicidin synthase subunit C (7756 aa).

Carrier domains lie at 977–1052, 2042–2116, 3557–3632, 4621–4695, 6141–6216, and 7200–7274; these read EPRN…AALQ, APAT…ADSS, APRT…ASLL, APAT…TVTD, APRK…AGLL, and APET…GDSV. Residues Ser1012, Ser2077, Ser3592, Ser4656, Ser6176, and Ser7235 each carry the O-(pantetheine 4'-phosphoryl)serine modification.

This sequence belongs to the ATP-dependent AMP-binding enzyme family. As to quaternary structure, large multienzyme complex composed of 4 subunits; LgrA, LgrB, LgrC and LgrD. Pantetheine 4'-phosphate serves as cofactor.

Its function is as follows. Activates the 7th to 12th amino acids (Val, D-Val, Trp, D-Leu, Xaa and D-Leu) in linear gramicidin and catalyzes the formation of the peptide bond between them. This enzyme is also responsible for the epimerization of the 8th (D-Val), the 10th (D-Leu) and 12th (D-Leu) amino acids. The 11th (Xaa) amino acid is Trp in linear gramicidin A; Phe in linear gramicidin B and Tyr in linear gramicidin C. This Brevibacillus parabrevis protein is Linear gramicidin synthase subunit C (lgrC).